The primary structure comprises 190 residues: Peptidyl-prolyl cis-trans isomerase A (190 aa).

The N-terminal stretch at 1–24 (MFKSTLAAMAAVFALSALSPAAMA) is a signal peptide. Residues 27–188 (GDPHVLLTTS…KPVVILSAKV (162 aa)) enclose the PPIase cyclophilin-type domain.

This sequence belongs to the cyclophilin-type PPIase family.

It is found in the periplasm. The enzyme catalyses [protein]-peptidylproline (omega=180) = [protein]-peptidylproline (omega=0). Functionally, PPIases accelerate the folding of proteins. It catalyzes the cis-trans isomerization of proline imidic peptide bonds in oligopeptides. The polypeptide is Peptidyl-prolyl cis-trans isomerase A (ppiA) (Escherichia coli O157:H7).